We begin with the raw amino-acid sequence, 251 residues long: tRNA (guanine-N(1)-)-methyltransferase (251 aa).

S-adenosyl-L-methionine-binding positions include glycine 113 and 133-138 (IGDYVL).

It belongs to the RNA methyltransferase TrmD family. In terms of assembly, homodimer.

Its subcellular location is the cytoplasm. The catalysed reaction is guanosine(37) in tRNA + S-adenosyl-L-methionine = N(1)-methylguanosine(37) in tRNA + S-adenosyl-L-homocysteine + H(+). Functionally, specifically methylates guanosine-37 in various tRNAs. The sequence is that of tRNA (guanine-N(1)-)-methyltransferase from Pectobacterium carotovorum subsp. carotovorum (strain PC1).